An 89-amino-acid polypeptide reads, in one-letter code: Late cornified envelope protein 3A (89 aa).

2 stretches are compositionally biased toward low complexity: residues 1–10 (MSCQQNQQQC) and 17–46 (PAKS…SERS). Disordered regions lie at residues 1–46 (MSCQ…SERS) and 62–89 (CQSS…AGCC).

Belongs to the LCE family. As to quaternary structure, interacts with CYSRT1; the interaction is direct. As to expression, skin-specific. Expression was readily detected in adult trunk skin, adult arm skin, fetal skin, penal skin, vulva, esophagus and tongue. Not expressed in the cervix, rectum, lung, colon, or placenta.

In terms of biological role, a structural component of the cornified envelope of the stratum corneum involved in innate cutaneous host defense. Possesses defensin-like antimicrobial activity against a broad spectrum of Gram-positive and Gram-negative bacteria, both aerobic and anaerobic species. Upon inflammation, may regulate skin barrier repair by shaping cutaneous microbiota composition and immune response to bacterial antigens. The sequence is that of Late cornified envelope protein 3A from Homo sapiens (Human).